A 373-amino-acid chain; its full sequence is Glutamate 5-kinase (373 aa).

Position 15 (Lys15) interacts with ATP. Residues Ser56, Asp143, and Asn155 each contribute to the substrate site. Position 175–176 (Ser175–Asp176) interacts with ATP. The region spanning Lys281–Ser358 is the PUA domain.

It belongs to the glutamate 5-kinase family.

It localises to the cytoplasm. It catalyses the reaction L-glutamate + ATP = L-glutamyl 5-phosphate + ADP. Its pathway is amino-acid biosynthesis; L-proline biosynthesis; L-glutamate 5-semialdehyde from L-glutamate: step 1/2. Catalyzes the transfer of a phosphate group to glutamate to form L-glutamate 5-phosphate. In Bradyrhizobium diazoefficiens (strain JCM 10833 / BCRC 13528 / IAM 13628 / NBRC 14792 / USDA 110), this protein is Glutamate 5-kinase.